Reading from the N-terminus, the 398-residue chain is MKIHEYQGKQLFARYGVPVPKGEPAFQASEVAPIADRLIAQTGNPVVVVKAQIHAGGRGKGGGVKVAKGGSAEATALAEKILGMQLVTKQTGPEGQKVRRLYIEQGLDIARELYFAMLVDRERRRIAVIASTEGGMDIEEVAHSTPEKIYKLFIDPVLGLAPYQGRQLAIALGLTAKETQRQFLKLVASLYACFTAEDCSLLEINPLVVTGAGDVFALDAKVSFDDNAEFRHADWNGMRDVDEEDPVELQAKRAGLSYVSLDGDIGCLVNGAGLAMATMDIILHYGGKPANFLDVGGGASQEQVKTAFQIILRSERVRGIFVNIFGGIMRCDVVAAGVIAAAKELGLKVPLVVRLEGTNVEAGRKLLDESGLTIQSASSMADGAQKIVAATRGGKAGA.

The ATP-grasp domain occupies 9–250 (KQLFARYGVP…VDEEDPVELQ (242 aa)). ATP-binding positions include lysine 50, 57 to 59 (GRG), glutamate 104, leucine 107, and glutamate 112. Mg(2+) contacts are provided by asparagine 205 and aspartate 219. Residues asparagine 270 and 327-329 (GIM) each bind substrate.

Belongs to the succinate/malate CoA ligase beta subunit family. Heterotetramer of two alpha and two beta subunits. Mg(2+) is required as a cofactor.

The catalysed reaction is succinate + ATP + CoA = succinyl-CoA + ADP + phosphate. It carries out the reaction GTP + succinate + CoA = succinyl-CoA + GDP + phosphate. It participates in carbohydrate metabolism; tricarboxylic acid cycle; succinate from succinyl-CoA (ligase route): step 1/1. In terms of biological role, succinyl-CoA synthetase functions in the citric acid cycle (TCA), coupling the hydrolysis of succinyl-CoA to the synthesis of either ATP or GTP and thus represents the only step of substrate-level phosphorylation in the TCA. The beta subunit provides nucleotide specificity of the enzyme and binds the substrate succinate, while the binding sites for coenzyme A and phosphate are found in the alpha subunit. This is Succinate--CoA ligase [ADP-forming] subunit beta from Sorangium cellulosum (strain So ce56) (Polyangium cellulosum (strain So ce56)).